The primary structure comprises 89 residues: Small ribosomal subunit protein uS15 (89 aa).

The protein belongs to the universal ribosomal protein uS15 family. As to quaternary structure, part of the 30S ribosomal subunit. Forms a bridge to the 50S subunit in the 70S ribosome, contacting the 23S rRNA.

Its function is as follows. One of the primary rRNA binding proteins, it binds directly to 16S rRNA where it helps nucleate assembly of the platform of the 30S subunit by binding and bridging several RNA helices of the 16S rRNA. In terms of biological role, forms an intersubunit bridge (bridge B4) with the 23S rRNA of the 50S subunit in the ribosome. In Ureaplasma parvum serovar 3 (strain ATCC 27815 / 27 / NCTC 11736), this protein is Small ribosomal subunit protein uS15.